A 278-amino-acid polypeptide reads, in one-letter code: MGWPWAPLTAVWALGVMGATALRIGAFNVQSFGDNKVSDPDCGSVIAQILAGYDIALVQEVRDPDLSAVSLLMEQINRVSKHEYGFVSSKPLGRDQYKEMYLFVYRKDVASVVSTYQYPDPEDAFSREPFVVKFSVPSCATKELVLIPLHAAPHQAVAEIDALYDVYLDVIDKWNTDDMLFLGDFNADCKYVKAHDWPSIRLRSSEVFKWLIPDSADTTVGNSDCAYDRIVVSGAHLRRSLKPHSASVHNFQEEFDLDQTQALAISDHFPVEVTFKTH.

The N-terminal stretch at 1–21 is a signal peptide; it reads MGWPWAPLTAVWALGVMGATA. Residues Glu99 and His150 contribute to the active site. The cysteines at positions 189 and 225 are disulfide-linked.

This sequence belongs to the DNase I family. Mg(2+) serves as cofactor. It depends on Ca(2+) as a cofactor.

Its subcellular location is the cytoplasm. It localises to the secreted. Divalent cation-dependent acid DNA endonuclease involved in the breakdown of the nucleus during corneocyte formation of epidermal keratinocytes. May play an immune role by eliminating harmful DNA released into the extracellular environment by damaged epidermal cells. The polypeptide is Deoxyribonuclease-1-like 2 (Dnase1l2) (Mus musculus (Mouse)).